The primary structure comprises 271 residues: Protein PXR1 (271 aa).

Positions 25–72 (TSRFGHQFLEKFGWKPGMGLGLSPMNSNTSHIKVSIKDDNVGLGAKLK) constitute a G-patch domain. A disordered region spans residues 147–239 (SNAKKRKREG…SASNIPDAVN (93 aa)). Residues 157-168 (DDSEDEDDDDKE) are compositionally biased toward acidic residues. Over residues 175–203 (KKHKKHKKHKKDKKKDKKDKKEHKKHKKE) the composition is skewed to basic residues. Residues 204 to 221 (EKRLKKEKRAEKTKETKK) show a composition bias toward basic and acidic residues. Phosphoserine is present on serine 230.

Belongs to the PINX1 family. As to quaternary structure, interacts with EST2.

The protein resides in the nucleus. Its subcellular location is the nucleolus. In terms of biological role, involved in rRNA-processing at A0, A1 and A2 sites through its action in U18 and U24 snoRNA 3'-end final trimming. Negative regulator of telomerase through competition for binding to EST2 with TLC1. The protein is Protein PXR1 (PXR1) of Saccharomyces cerevisiae (strain ATCC 204508 / S288c) (Baker's yeast).